A 1213-amino-acid polypeptide reads, in one-letter code: Oligopeptidase PhomG' (1213 aa).

A Zn(2+)-binding site is contributed by His447. The active site involves Glu448. Positions 451 and 454 each coordinate Zn(2+).

It belongs to the peptidase M3 family. Monomer. Zn(2+) is required as a cofactor.

It participates in mycotoxin biosynthesis. In terms of biological role, oligopeptidase; part of the gene cluster that mediates the biosynthesis of the phomopsins, a group of hexapeptide mycotoxins which infects lupins and causes lupinosis disease in livestock. Within the pathway, phomG and phomG' are probably involved in the processing of the phomA and phomA' precursors. The pathway starts with the processing of the precursor phomA by several endopeptidases including kexin proteases as well as the cluster-specific S41 family peptidase phomP1 and the oligopeptidase phomG to produce 10 identical copies of the hexapeptide Tyr-Val-Ile-Pro-Ile-Asp. After being excised from the precursor peptide, the core peptides are cyclized and modified post-translationally by enzymes encoded within the gene cluster. The timing and order of proteolysis of the phomA precursor and PTMs are still unknown. Two tyrosinase-like enzymes, phomQ1 and phomQ2, catalyze the chlorination and hydroxylation of Tyr, respectively. PhomYb, is proposed to be involved in the construction of the macrocyclic structure. The other 4 ustYa family proteins may be involved in PTMs that generate the unique structure of phomopsin A. PhomYa is required for the hydroxylation of C-beta of Tyr. PhomYc, phomYd, and phomYe are responsible for the biosynthesis of 2,3-dehydroisoleucine (dIle), 2,3-dehydroaspartic acid (dAsp), and 3,4-dehydroproline (dPro), respectively. While dIle formation by phomYc is indispensable for the installation of dAsp by phomYd, the order of the other PTMs have not been elucidated yet. Most of the biosynthetic enzymes likely have broad substrate specificity, and thus, there might be a metabolic grid from a precursor to phomopsin A. The enzyme(s) responsible for the biosynthesis of 3,4-dehydrovaline (dVal) have also not been identified yet. Finally, phomM acts as an S-adenosylmethionine-dependent alpha-N-methyltransferase that catalyzes two successive N-methylation reactions, converting N-desmethyl-phomopsin A to phomopsin A and phomopsin A further to an N,N-dimethylated congener called phomopsin E. The polypeptide is Oligopeptidase PhomG' (Diaporthe leptostromiformis (Lupinosis disease fungus)).